Here is a 255-residue protein sequence, read N- to C-terminus: Leucyl/phenylalanyl-tRNA--protein transferase (255 aa).

This sequence belongs to the L/F-transferase family.

Its subcellular location is the cytoplasm. It carries out the reaction N-terminal L-lysyl-[protein] + L-leucyl-tRNA(Leu) = N-terminal L-leucyl-L-lysyl-[protein] + tRNA(Leu) + H(+). The enzyme catalyses N-terminal L-arginyl-[protein] + L-leucyl-tRNA(Leu) = N-terminal L-leucyl-L-arginyl-[protein] + tRNA(Leu) + H(+). It catalyses the reaction L-phenylalanyl-tRNA(Phe) + an N-terminal L-alpha-aminoacyl-[protein] = an N-terminal L-phenylalanyl-L-alpha-aminoacyl-[protein] + tRNA(Phe). In terms of biological role, functions in the N-end rule pathway of protein degradation where it conjugates Leu, Phe and, less efficiently, Met from aminoacyl-tRNAs to the N-termini of proteins containing an N-terminal arginine or lysine. The chain is Leucyl/phenylalanyl-tRNA--protein transferase from Burkholderia thailandensis (strain ATCC 700388 / DSM 13276 / CCUG 48851 / CIP 106301 / E264).